The sequence spans 297 residues: Putative S-adenosyl-L-methionine-dependent methyltransferase Mjls_1072 (297 aa).

S-adenosyl-L-methionine contacts are provided by residues aspartate 124 and 153-154 (DL).

It belongs to the UPF0677 family.

In terms of biological role, exhibits S-adenosyl-L-methionine-dependent methyltransferase activity. The protein is Putative S-adenosyl-L-methionine-dependent methyltransferase Mjls_1072 of Mycobacterium sp. (strain JLS).